Reading from the N-terminus, the 357-residue chain is Uroporphyrinogen decarboxylase (357 aa).

Substrate-binding positions include 27-31 (RQAGR), aspartate 77, tyrosine 154, threonine 209, and histidine 327.

It belongs to the uroporphyrinogen decarboxylase family. In terms of assembly, homodimer.

It is found in the cytoplasm. The enzyme catalyses uroporphyrinogen III + 4 H(+) = coproporphyrinogen III + 4 CO2. The protein operates within porphyrin-containing compound metabolism; protoporphyrin-IX biosynthesis; coproporphyrinogen-III from 5-aminolevulinate: step 4/4. Its function is as follows. Catalyzes the decarboxylation of four acetate groups of uroporphyrinogen-III to yield coproporphyrinogen-III. This is Uroporphyrinogen decarboxylase from Nitrosococcus oceani (strain ATCC 19707 / BCRC 17464 / JCM 30415 / NCIMB 11848 / C-107).